Reading from the N-terminus, the 221-residue chain is Fructokinase (221 aa).

Belongs to the carbohydrate kinase PfkB family.

The enzyme catalyses D-fructose + ATP = D-fructose 6-phosphate + ADP + H(+). This chain is Fructokinase (scrK), found in Salmonella thompson.